We begin with the raw amino-acid sequence, 377 residues long: Chaperone protein DnaJ (377 aa).

Residues 5–70 form the J domain; it reads DYYEVLGLQK…QKRAAYDQYG (66 aa). The CR-type zinc finger occupies 134–212; it reads GCKKDIRLST…CHGDGRVQKA (79 aa). C147, C150, C164, C167, C186, C189, C200, and C203 together coordinate Zn(2+). CXXCXGXG motif repeat units lie at residues 147 to 154, 164 to 171, 186 to 193, and 200 to 207; these read CDNCHGTG, CPHCHGAG, CPSCHGTG, and CHSCHGDG.

This sequence belongs to the DnaJ family. In terms of assembly, homodimer. Requires Zn(2+) as cofactor.

It is found in the cytoplasm. Functionally, participates actively in the response to hyperosmotic and heat shock by preventing the aggregation of stress-denatured proteins and by disaggregating proteins, also in an autonomous, DnaK-independent fashion. Unfolded proteins bind initially to DnaJ; upon interaction with the DnaJ-bound protein, DnaK hydrolyzes its bound ATP, resulting in the formation of a stable complex. GrpE releases ADP from DnaK; ATP binding to DnaK triggers the release of the substrate protein, thus completing the reaction cycle. Several rounds of ATP-dependent interactions between DnaJ, DnaK and GrpE are required for fully efficient folding. Also involved, together with DnaK and GrpE, in the DNA replication of plasmids through activation of initiation proteins. The protein is Chaperone protein DnaJ of Haemophilus ducreyi (strain 35000HP / ATCC 700724).